The sequence spans 107 residues: Transcriptional regulator Rv3488 (107 aa).

4 residues coordinate Cd(2+): His-16, Glu-30, His-34, and His-101.

As to quaternary structure, homodimer.

Its function is as follows. May have transcription regulation and metal-detoxifying functions through which it may enhance intracellular survival of mycobacteria. Binds to its own promoter region and to the Rv1999c promoter region. It displays strong affinity for cadmium ions, but can also bind zinc, manganese and nickel. Expression increases the intracellular survival of recombinant M.smegmatis in murine macrophage cell line and increases its tolerance to cadmium ions. The protein is Transcriptional regulator Rv3488 of Mycobacterium tuberculosis (strain ATCC 25618 / H37Rv).